The primary structure comprises 361 residues: Methylthioribose-1-phosphate isomerase (361 aa).

D245 functions as the Proton donor in the catalytic mechanism.

This sequence belongs to the eIF-2B alpha/beta/delta subunits family. MtnA subfamily.

Its subcellular location is the cytoplasm. The protein resides in the nucleus. The catalysed reaction is 5-(methylsulfanyl)-alpha-D-ribose 1-phosphate = 5-(methylsulfanyl)-D-ribulose 1-phosphate. It participates in amino-acid biosynthesis; L-methionine biosynthesis via salvage pathway; L-methionine from S-methyl-5-thio-alpha-D-ribose 1-phosphate: step 1/6. Catalyzes the interconversion of methylthioribose-1-phosphate (MTR-1-P) into methylthioribulose-1-phosphate (MTRu-1-P). The chain is Methylthioribose-1-phosphate isomerase from Monosiga brevicollis (Choanoflagellate).